The primary structure comprises 239 residues: MQYFDLMKKACDSVGMEFNEDKYQKFMLYKDLLKEWNEKINLTAITEDEEIVKKHFIDCIKAFKADEFKKAKTVIDVGTGAGFPGLPIAIMREDVEVTLLDSLNKRINFLNEVVNKLGLKNVKTIHSRAEDGARKKELRENFDIATSRAVANMCVLSEFCIPYVKVNGNFIALKGPNITEELNDSKNAIGTLGGKLKGITEVEIEGTDLNHNLVIVDKIKSTPKTFPRKAGNVTKKPLK.

Residues Gly78, Phe83, 129–130 (AE), and Arg148 each bind S-adenosyl-L-methionine.

Belongs to the methyltransferase superfamily. RNA methyltransferase RsmG family.

It localises to the cytoplasm. Specifically methylates the N7 position of a guanine in 16S rRNA. This chain is Ribosomal RNA small subunit methyltransferase G, found in Clostridium perfringens (strain 13 / Type A).